The primary structure comprises 509 residues: Maturase K (509 aa).

This sequence belongs to the intron maturase 2 family. MatK subfamily.

The protein resides in the plastid. The protein localises to the chloroplast. In terms of biological role, usually encoded in the trnK tRNA gene intron. Probably assists in splicing its own and other chloroplast group II introns. The sequence is that of Maturase K from Amentotaxus argotaenia (Chinese flowering yew).